The primary structure comprises 488 residues: Altronate oxidoreductase (488 aa).

18-29 (VIQFGEGNFLRA) is an NAD(+) binding site.

Belongs to the mannitol dehydrogenase family. UxaB subfamily.

It carries out the reaction D-altronate + NAD(+) = keto-D-tagaturonate + NADH + H(+). Its pathway is carbohydrate metabolism; pentose and glucuronate interconversion. The chain is Altronate oxidoreductase from Pectobacterium carotovorum subsp. carotovorum (strain PC1).